A 252-amino-acid chain; its full sequence is 2-succinyl-6-hydroxy-2,4-cyclohexadiene-1-carboxylate synthase (252 aa).

Belongs to the AB hydrolase superfamily. MenH family. Monomer.

It catalyses the reaction 5-enolpyruvoyl-6-hydroxy-2-succinyl-cyclohex-3-ene-1-carboxylate = (1R,6R)-6-hydroxy-2-succinyl-cyclohexa-2,4-diene-1-carboxylate + pyruvate. It participates in quinol/quinone metabolism; 1,4-dihydroxy-2-naphthoate biosynthesis; 1,4-dihydroxy-2-naphthoate from chorismate: step 3/7. It functions in the pathway quinol/quinone metabolism; menaquinone biosynthesis. Functionally, catalyzes a proton abstraction reaction that results in 2,5-elimination of pyruvate from 2-succinyl-5-enolpyruvyl-6-hydroxy-3-cyclohexene-1-carboxylate (SEPHCHC) and the formation of 2-succinyl-6-hydroxy-2,4-cyclohexadiene-1-carboxylate (SHCHC). The chain is 2-succinyl-6-hydroxy-2,4-cyclohexadiene-1-carboxylate synthase from Escherichia coli O157:H7.